The chain runs to 360 residues: Dihydroorotate dehydrogenase (quinone) (360 aa).

Residues 66–70 and Thr90 each bind FMN; that span reads AGFDK. Lys70 is a binding site for substrate. 115–119 is a binding site for substrate; it reads NRMGF. 2 residues coordinate FMN: Asn143 and Asn176. A substrate-binding site is contributed by Asn176. Ser179 acts as the Nucleophile in catalysis. Residue Asn181 coordinates substrate. Residues Lys212 and Thr240 each contribute to the FMN site. Substrate is bound at residue 241-242; sequence NT. Residues Gly264, Gly293, and 314-315 contribute to the FMN site; that span reads YT.

The protein belongs to the dihydroorotate dehydrogenase family. Type 2 subfamily. Monomer. The cofactor is FMN.

The protein localises to the cell membrane. The enzyme catalyses (S)-dihydroorotate + a quinone = orotate + a quinol. It participates in pyrimidine metabolism; UMP biosynthesis via de novo pathway; orotate from (S)-dihydroorotate (quinone route): step 1/1. Catalyzes the conversion of dihydroorotate to orotate with quinone as electron acceptor. This is Dihydroorotate dehydrogenase (quinone) from Mycobacterium marinum (strain ATCC BAA-535 / M).